The primary structure comprises 405 residues: Glucose-1-phosphate adenylyltransferase 1 (405 aa).

Alpha-D-glucose 1-phosphate contacts are provided by residues Tyr96, Gly161, 176–177, and Ser194; that span reads EK.

This sequence belongs to the bacterial/plant glucose-1-phosphate adenylyltransferase family. As to quaternary structure, homotetramer.

It carries out the reaction alpha-D-glucose 1-phosphate + ATP + H(+) = ADP-alpha-D-glucose + diphosphate. The protein operates within glycan biosynthesis; glycogen biosynthesis. Its function is as follows. Involved in the biosynthesis of ADP-glucose, a building block required for the elongation reactions to produce glycogen. Catalyzes the reaction between ATP and alpha-D-glucose 1-phosphate (G1P) to produce pyrophosphate and ADP-Glc. The protein is Glucose-1-phosphate adenylyltransferase 1 of Vibrio parahaemolyticus serotype O3:K6 (strain RIMD 2210633).